The chain runs to 348 residues: Histo-blood group ABO system transferase 1 (348 aa).

The Cytoplasmic segment spans residues 1–11; the sequence is MDLRGRPKCYS. The helical; Signal-anchor for type II membrane protein transmembrane segment at 12 to 32 threads the bilayer; that stretch reads LHLGILPFIVLVLVFFGYGFL. The Lumenal portion of the chain corresponds to 33–348; the sequence is SHKIQEFRNP…VPKNHQAIRN (316 aa). N108 carries an N-linked (GlcNAc...) asparagine glycan. UDP-N-acetyl-alpha-D-galactosamine contacts are provided by residues 116–118, Y121, and 206–208; these read FAI and DVD. Positions 206 and 208 each coordinate Mn(2+). An alpha-L-fucosyl-(1-&gt;2)-beta-D-galactosyl derivative contacts are provided by H228, T240, E298, and D321. E298 (nucleophile) is an active-site residue.

The protein belongs to the glycosyltransferase 6 family. The cofactor is Mn(2+). In terms of tissue distribution, tongue, esophagus, large intestine, stomach, caecum, pancreas, uterus, seminal vesicle, submaxillary gland, parotid gland, thyroid gland, parathyroid gland, salivary gland and thymus (at protein level). Esophagus, large intestine, stomach, kidney, urinary bladder, uterus and thymus.

The protein localises to the golgi apparatus. It is found in the golgi stack membrane. It localises to the secreted. It catalyses the reaction an alpha-L-fucosyl-(1-&gt;2)-beta-D-galactosyl derivative + UDP-N-acetyl-alpha-D-galactosamine = an N-acetyl-alpha-D-galactosaminyl-(1-&gt;3)-[alpha-L-fucosyl-(1-&gt;2)]-beta-D-galactosyl derivative + UDP + H(+). It carries out the reaction an alpha-L-fucosyl-(1-&gt;2)-beta-D-galactosyl derivative + UDP-alpha-D-galactose = an alpha-D-galactosyl-(1-&gt;3)-[alpha-L-fucosyl-(1-&gt;2)]-beta-D-galactosyl derivative + UDP + H(+). It functions in the pathway protein modification; protein glycosylation. Its function is as follows. Possesses strong A transferase activity and weak B transferase activity. This is Histo-blood group ABO system transferase 1 (Abo) from Rattus norvegicus (Rat).